The chain runs to 479 residues: Aspartyl/glutamyl-tRNA(Asn/Gln) amidotransferase subunit B (479 aa).

The protein belongs to the GatB/GatE family. GatB subfamily. In terms of assembly, heterotrimer of A, B and C subunits.

It carries out the reaction L-glutamyl-tRNA(Gln) + L-glutamine + ATP + H2O = L-glutaminyl-tRNA(Gln) + L-glutamate + ADP + phosphate + H(+). It catalyses the reaction L-aspartyl-tRNA(Asn) + L-glutamine + ATP + H2O = L-asparaginyl-tRNA(Asn) + L-glutamate + ADP + phosphate + 2 H(+). In terms of biological role, allows the formation of correctly charged Asn-tRNA(Asn) or Gln-tRNA(Gln) through the transamidation of misacylated Asp-tRNA(Asn) or Glu-tRNA(Gln) in organisms which lack either or both of asparaginyl-tRNA or glutaminyl-tRNA synthetases. The reaction takes place in the presence of glutamine and ATP through an activated phospho-Asp-tRNA(Asn) or phospho-Glu-tRNA(Gln). The polypeptide is Aspartyl/glutamyl-tRNA(Asn/Gln) amidotransferase subunit B (Mycoplasma capricolum subsp. capricolum (strain California kid / ATCC 27343 / NCTC 10154)).